Reading from the N-terminus, the 77-residue chain is Acyl carrier protein (77 aa).

The region spanning 2-77 is the Carrier domain; it reads SDIADRVKKI…DAVKFISDAS (76 aa). Serine 37 carries the post-translational modification O-(pantetheine 4'-phosphoryl)serine.

It belongs to the acyl carrier protein (ACP) family. 4'-phosphopantetheine is transferred from CoA to a specific serine of apo-ACP by AcpS. This modification is essential for activity because fatty acids are bound in thioester linkage to the sulfhydryl of the prosthetic group.

The protein resides in the cytoplasm. The protein operates within lipid metabolism; fatty acid biosynthesis. Carrier of the growing fatty acid chain in fatty acid biosynthesis. The sequence is that of Acyl carrier protein from Roseobacter denitrificans (strain ATCC 33942 / OCh 114) (Erythrobacter sp. (strain OCh 114)).